Here is a 314-residue protein sequence, read N- to C-terminus: Torsin-2A (314 aa).

A signal peptide spans 1 to 19; it reads MAVRWWIIPMLLLVPGSSG. Residue 86–93 coordinates ATP; that stretch reads GWSGTGKT. Residues Asn-142 and Asn-283 are each glycosylated (N-linked (GlcNAc...) asparagine).

This sequence belongs to the ClpA/ClpB family. Torsin subfamily. Homohexamer.

The protein resides in the endoplasmic reticulum lumen. This Xenopus laevis (African clawed frog) protein is Torsin-2A (tor2a).